The sequence spans 853 residues: Translation initiation factor IF-2 (853 aa).

Disordered stretches follow at residues 1–68 (MSDT…ASDG) and 94–265 (LEQR…DKTS). Residues 20–32 (RKTSGTVKQSFSH) show a composition bias toward polar residues. Residues 94–161 (LEQRKAEEAS…ASREAVERPS (68 aa)) show a composition bias toward basic and acidic residues. Over residues 163 to 176 (APRAAPAAQTPPAA) the composition is skewed to low complexity. Basic and acidic residues-rich tracts occupy residues 196-219 (PARD…DAER) and 245-265 (RARE…DKTS). In terms of domain architecture, tr-type G spans 347-515 (PRAPIVTIMG…AISIQAEILE (169 aa)). Residues 356 to 363 (GHVDHGKT) form a G1 region. 356 to 363 (GHVDHGKT) lines the GTP pocket. Residues 381–385 (GITQH) are G2. Positions 403-406 (DTPG) are G3. GTP contacts are provided by residues 403-407 (DTPGH) and 457-460 (TKSD). A G4 region spans residues 457–460 (TKSD). The G5 stretch occupies residues 493–495 (SAK).

It belongs to the TRAFAC class translation factor GTPase superfamily. Classic translation factor GTPase family. IF-2 subfamily.

Its subcellular location is the cytoplasm. Functionally, one of the essential components for the initiation of protein synthesis. Protects formylmethionyl-tRNA from spontaneous hydrolysis and promotes its binding to the 30S ribosomal subunits. Also involved in the hydrolysis of GTP during the formation of the 70S ribosomal complex. The chain is Translation initiation factor IF-2 from Hyphomonas neptunium (strain ATCC 15444).